A 520-amino-acid polypeptide reads, in one-letter code: TnpB-like protein L79 (520 aa).

A compositionally biased stretch (basic residues) spans 21–47 (GSKTKKKVFVKKKPPDKKPLKKPVKKT). A disordered region spans residues 21–52 (GSKTKKKVFVKKKPPDKKPLKKPVKKTVKTDK). Residues C474, C477, C491, and C494 each contribute to the Zn(2+) site.

In the central section; belongs to the transposase 2 family. The protein in the C-terminal section; belongs to the transposase 35 family.

The sequence is that of TnpB-like protein L79 from Acanthamoeba polyphaga mimivirus (APMV).